A 146-amino-acid chain; its full sequence is Hemoglobin subunit beta (146 aa).

V1 carries the N-acetylvaline modification. The region spanning 2–146 (HLTAEEKSAV…VANALAHKYH (145 aa)) is the Globin domain. At T12 the chain carries Phosphothreonine. S44 is modified (phosphoserine). N6-acetyllysine is present on K59. Residue H63 participates in heme b binding. Residue K82 is modified to N6-acetyllysine. Heme b is bound at residue H92. The residue at position 93 (C93) is an S-nitrosocysteine. The residue at position 144 (K144) is an N6-acetyllysine.

The protein belongs to the globin family. As to quaternary structure, heterotetramer of two alpha chains and two beta chains. As to expression, red blood cells.

Involved in oxygen transport from the lung to the various peripheral tissues. The chain is Hemoglobin subunit beta (HBB) from Meles meles (Eurasian badger).